Here is a 378-residue protein sequence, read N- to C-terminus: MARDYYGLLGVSRNASDADIKRAYRKLARELHPDINPDEAAQAKFKEISMAYEVLSDPEKRRIVDLGGDPMENAAASPSGFGGFGGLGDVFEAFFGGSSASRGPIGRVRPGSDSLLPMWLDLEECATGVTKQVTVDTAVLCDRCQGKGTNGDSAPIPCDTCGGRGEVQTVQRSLLGQMVTARPCPTCRGVGVVIPDPCCQCVGDGRVRARREITVKIPSGVGDGMRVRLAAQGEVGPGGGPAGDLYVEVHEQAHDIFVRDGDDLHCTVSVPMVDAALGTTITVDAILDGMSEIDISPGTQPGSVIELRGQGMPHLRSNTRGNLHVHVEVMVPTRLDQHDTELLRELKRRRSRDVAEVRSTHAAGGGLFSRLRETFTNR.

The J domain occupies 4–68 (DYYGLLGVSR…EKRRIVDLGG (65 aa)). The CR-type zinc finger occupies 128-210 (GVTKQVTVDT…CVGDGRVRAR (83 aa)). 8 residues coordinate Zn(2+): Cys141, Cys144, Cys158, Cys161, Cys184, Cys187, Cys198, and Cys201. 4 CXXCXGXG motif repeats span residues 141-148 (CDRCQGKG), 158-165 (CDTCGGRG), 184-191 (CPTCRGVG), and 198-205 (CCQCVGDG).

Belongs to the DnaJ family. In terms of assembly, homodimer. The cofactor is Zn(2+).

Its subcellular location is the cytoplasm. Its function is as follows. Participates actively in the response to hyperosmotic and heat shock by preventing the aggregation of stress-denatured proteins and by disaggregating proteins, also in an autonomous, DnaK-independent fashion. Unfolded proteins bind initially to DnaJ; upon interaction with the DnaJ-bound protein, DnaK hydrolyzes its bound ATP, resulting in the formation of a stable complex. GrpE releases ADP from DnaK; ATP binding to DnaK triggers the release of the substrate protein, thus completing the reaction cycle. Several rounds of ATP-dependent interactions between DnaJ, DnaK and GrpE are required for fully efficient folding. Also involved, together with DnaK and GrpE, in the DNA replication of plasmids through activation of initiation proteins. The polypeptide is Chaperone protein DnaJ 2 (Mycobacterium leprae (strain TN)).